We begin with the raw amino-acid sequence, 450 residues long: Alpha-2B adrenergic receptor (450 aa).

Topologically, residues 1–12 (MDHQDPYSVQAT) are extracellular. The helical transmembrane segment at 13-38 (AAIAAAITFLILFTIFGNALVILAVL) threads the bilayer. Residues 39–48 (TSRSLRAPQN) lie on the Cytoplasmic side of the membrane. A helical membrane pass occupies residues 49 to 69 (LFLVSLAAADILVATLIIPFS). The Extracellular portion of the chain corresponds to 70–86 (LANELLGYWYFRRTWCE). A disulfide bond links Cys-85 and Cys-164. The helical transmembrane segment at 87–107 (VYLALDVLFCTSSIVHLCAIS) threads the bilayer. Over 108 to 128 (LDRYWAVSRALEYNSKRTPRR) the chain is Cytoplasmic. A helical membrane pass occupies residues 129 to 149 (IKCIILTVWLIAAVISLPPLI). Over 150–172 (YKGDQGPQPRGRPQCKLNQEAWY) the chain is Extracellular. A helical transmembrane segment spans residues 173–193 (ILASSIGSFFAPCLIMILVYL). At 194-368 (RIYLIAKRSN…RRAQLTREKR (175 aa)) the chain is on the cytoplasmic side. Disordered stretches follow at residues 204–229 (RRGP…GGAL) and 241–329 (ASAR…PLQQ). A compositionally biased stretch (basic and acidic residues) spans 246–256 (VNGHSKSTGEK). The segment covering 293-311 (PEDEAEEEEEEEEEEEECE) has biased composition (acidic residues). Over residues 312-326 (PQAVPVSPASACSPP) the composition is skewed to low complexity. A helical transmembrane segment spans residues 369 to 389 (FTFVLAVVIGVFVLCWFPFFF). Over 390-405 (SYSLGAICPKHCKVPH) the chain is Extracellular. Residues 406–426 (GLFQFFFWIGYCNSSLNPVIY) form a helical membrane-spanning segment. Topologically, residues 427–450 (TIFNQDFRRAFRRILCRPWTQTAW) are cytoplasmic. Cys-442 carries S-palmitoyl cysteine lipidation.

Belongs to the G-protein coupled receptor 1 family. Adrenergic receptor subfamily. ADRA2B sub-subfamily. Interacts with RAB26. Interacts with PPP1R9B. Interacts with GGA1, GGA2 and GGA3.

The protein resides in the cell membrane. Alpha-2 adrenergic receptors mediate the catecholamine-induced inhibition of adenylate cyclase through the action of G proteins. The rank order of potency for agonists of this receptor is clonidine &gt; norepinephrine &gt; epinephrine = oxymetazoline &gt; dopamine &gt; p-tyramine = phenylephrine &gt; serotonin &gt; p-synephrine / p-octopamine. For antagonists, the rank order is yohimbine &gt; chlorpromazine &gt; phentolamine &gt; mianserine &gt; spiperone &gt; prazosin &gt; alprenolol &gt; propanolol &gt; pindolol. This Homo sapiens (Human) protein is Alpha-2B adrenergic receptor (ADRA2B).